The chain runs to 360 residues: Peptide chain release factor 1 (360 aa).

The residue at position 235 (Gln-235) is an N5-methylglutamine. A compositionally biased stretch (basic and acidic residues) spans 291–308 (ASERRNLLGTGDRSDRNR). A disordered region spans residues 291 to 312 (ASERRNLLGTGDRSDRNRTYNF).

The protein belongs to the prokaryotic/mitochondrial release factor family. Methylated by PrmC. Methylation increases the termination efficiency of RF1.

It is found in the cytoplasm. Peptide chain release factor 1 directs the termination of translation in response to the peptide chain termination codons UAG and UAA. The protein is Peptide chain release factor 1 of Yersinia pseudotuberculosis serotype I (strain IP32953).